Reading from the N-terminus, the 1194-residue chain is ATP-dependent RNA helicase DHX30 (1194 aa).

Residues 1–10 (MFTLDSFRKD) show a composition bias toward basic and acidic residues. The disordered stretch occupies residues 1–27 (MFTLDSFRKDRTQHRQRQCKLPPPRLP). Ser6 carries the post-translational modification Phosphoserine. Residues 53–121 (PKNLLNSVIG…QAAAAACQLF (69 aa)) enclose the DRBM domain. The disordered stretch occupies residues 153 to 200 (WWRPEPTMPPTSWRQLNPENIRPAGTGGLSRSLGREEEEDEEEELEEG). The span at 188-200 (EEEEDEEEELEEG) shows a compositional bias: acidic residues. Phosphoserine is present on residues Ser226 and Ser380. Residues 444–612 (LSAIEQHPVV…FGGCPVIKVP (169 aa)) form the Helicase ATP-binding domain. 457–464 (GDTGCGKT) provides a ligand contact to ATP. The DEAH box signature appears at 559–562 (DEVH). One can recognise a Helicase C-terminal domain in the interval 654-827 (LVTDLVLHID…NLVLQAKIHM (174 aa)).

It belongs to the DEAD box helicase family. DEAH subfamily. As to quaternary structure, identified in a complex with TFAM and SSBP1. Interacts (via N-terminus) with ZC3HAV1 (via N-terminal domain) in an RNA-independent manner. Found in a complex with GRSF1, DDX28, FASTKD2 and FASTKD5.

The protein resides in the cytoplasm. It localises to the mitochondrion. The protein localises to the mitochondrion matrix. Its subcellular location is the mitochondrion nucleoid. The catalysed reaction is ATP + H2O = ADP + phosphate + H(+). In terms of biological role, RNA-dependent helicase. Plays an important role in the assembly of the mitochondrial large ribosomal subunit. Associates with mitochondrial DNA. Required for optimal function of the zinc-finger antiviral protein ZC3HAV1. Involved in nervous system development and differentiation through its involvement in the up-regulation of a number of genes which are required for neurogenesis, including GSC, NCAM1, neurogenin, and NEUROD. The protein is ATP-dependent RNA helicase DHX30 (Dhx30) of Rattus norvegicus (Rat).